Reading from the N-terminus, the 505-residue chain is DNA primase DnaG (505 aa).

The Toprim domain occupies 167–241 (DAVIVVEGRA…DVDYVAFAPP (75 aa)). Residues glutamate 173, aspartate 215, and aspartate 217 each coordinate Mg(2+). A disordered region spans residues 268–410 (DEPNLREAAT…PLDNEPRSIE (143 aa)). The segment covering 318 to 327 (AGVVAGGARS) has biased composition (low complexity). Composition is skewed to acidic residues over residues 349 to 376 (GEVD…DAEF) and 384 to 402 (PNLD…DAPL).

This sequence belongs to the archaeal DnaG primase family. As to quaternary structure, forms a ternary complex with MCM helicase and DNA. Mg(2+) serves as cofactor.

The enzyme catalyses ssDNA + n NTP = ssDNA/pppN(pN)n-1 hybrid + (n-1) diphosphate.. Functionally, RNA polymerase that catalyzes the synthesis of short RNA molecules used as primers for DNA polymerase during DNA replication. This is DNA primase DnaG from Halorubrum lacusprofundi (strain ATCC 49239 / DSM 5036 / JCM 8891 / ACAM 34).